We begin with the raw amino-acid sequence, 783 residues long: LPS-assembly protein LptD (783 aa).

The first 24 residues, 1–24 (MKKNYYSLISFSIFTALYSTAGFA), serve as a signal peptide directing secretion.

It belongs to the LptD family. Component of the lipopolysaccharide transport and assembly complex. Interacts with LptE and LptA.

Its subcellular location is the cell outer membrane. In terms of biological role, together with LptE, is involved in the assembly of lipopolysaccharide (LPS) at the surface of the outer membrane. The polypeptide is LPS-assembly protein LptD (Mannheimia succiniciproducens (strain KCTC 0769BP / MBEL55E)).